The primary structure comprises 560 residues: Membrane protein insertase YidC (560 aa).

A run of 6 helical transmembrane segments spans residues 5-25 (IINLIAAIILSLSIIFGWQYF), 334-354 (AIDFGWFYIITKPVFYAMNFF), 357-377 (YVGNFGVSILIVTVIIKLLMF), 431-451 (LPILVQIPVFFSIYKVLYVTI), 476-496 (LFGLLPFSPPLFLMIGAWPIL), and 522-542 (FMPLIFLFMFSSFPVGLLIYW).

This sequence belongs to the OXA1/ALB3/YidC family. Type 1 subfamily. As to quaternary structure, interacts with the Sec translocase complex via SecD. Specifically interacts with transmembrane segments of nascent integral membrane proteins during membrane integration.

It is found in the cell inner membrane. Its function is as follows. Required for the insertion and/or proper folding and/or complex formation of integral membrane proteins into the membrane. Involved in integration of membrane proteins that insert both dependently and independently of the Sec translocase complex, as well as at least some lipoproteins. Aids folding of multispanning membrane proteins. The sequence is that of Membrane protein insertase YidC from Rickettsia africae (strain ESF-5).